The sequence spans 318 residues: Probable 3-hydroxyisobutyrate dehydrogenase-like 3, mitochondrial (318 aa).

Residues 35–64 and S129 each bind NAD(+); that span reads TRIGWIGIGIMGSAMVSHIIAAGYSVTVYA. K203 is an active-site residue. K271 contributes to the NAD(+) binding site.

The protein belongs to the HIBADH-related family. 3-hydroxyisobutyrate dehydrogenase subfamily.

The protein resides in the mitochondrion. The catalysed reaction is 3-hydroxy-2-methylpropanoate + NAD(+) = 2-methyl-3-oxopropanoate + NADH + H(+). Its pathway is amino-acid degradation; L-valine degradation. The polypeptide is Probable 3-hydroxyisobutyrate dehydrogenase-like 3, mitochondrial (Arabidopsis thaliana (Mouse-ear cress)).